A 304-amino-acid polypeptide reads, in one-letter code: Developmental pluripotency-associated protein 4 (304 aa).

Over residues 1–11 (MLRGSASSTSM) the composition is skewed to polar residues. 2 disordered regions span residues 1 to 84 (MLRG…IPPL) and 147 to 176 (KKLKVEKGETSLQSSETHPPEVALPPVGEP). Residues 12–29 (EKAKGKEWTSTEKSREED) are compositionally biased toward basic and acidic residues. Position 215 is a phosphothreonine (Thr-215). Phosphoserine is present on residues Ser-221 and Ser-226.

In terms of assembly, interacts with DPPA2. Interacts with PCGF1.

Its subcellular location is the nucleus. May be involved in the maintenance of active epigenetic status of target genes. May inhibit differentiation of embryonic cells into a primitive ectoderm lineage. The chain is Developmental pluripotency-associated protein 4 (DPPA4) from Homo sapiens (Human).